Here is a 385-residue protein sequence, read N- to C-terminus: Succinate--CoA ligase [ADP-forming] subunit beta (385 aa).

The region spanning 9–240 (KEIFAKYGIP…ETQLPQLEVE (232 aa)) is the ATP-grasp domain. ATP-binding positions include Lys-46, 53 to 55 (GRG), Glu-98, Thr-101, and Glu-106. Mg(2+)-binding residues include Asn-195 and Asp-209. Substrate-binding positions include Asn-260 and 317-319 (GIL).

Belongs to the succinate/malate CoA ligase beta subunit family. In terms of assembly, heterotetramer of two alpha and two beta subunits. Requires Mg(2+) as cofactor.

The enzyme catalyses succinate + ATP + CoA = succinyl-CoA + ADP + phosphate. It carries out the reaction GTP + succinate + CoA = succinyl-CoA + GDP + phosphate. The protein operates within carbohydrate metabolism; tricarboxylic acid cycle; succinate from succinyl-CoA (ligase route): step 1/1. Succinyl-CoA synthetase functions in the citric acid cycle (TCA), coupling the hydrolysis of succinyl-CoA to the synthesis of either ATP or GTP and thus represents the only step of substrate-level phosphorylation in the TCA. The beta subunit provides nucleotide specificity of the enzyme and binds the substrate succinate, while the binding sites for coenzyme A and phosphate are found in the alpha subunit. This chain is Succinate--CoA ligase [ADP-forming] subunit beta, found in Aquifex aeolicus (strain VF5).